Reading from the N-terminus, the 1009-residue chain is Rho GTPase-activating protein gacT (1009 aa).

Disordered regions lie at residues 1 to 72 (MKNI…SRNH) and 89 to 117 (TSHH…QQTQ). The span at 12-23 (FHKDKKEGDKQD) shows a compositional bias: basic and acidic residues. The span at 26-35 (GSSGSSGNSG) shows a compositional bias: low complexity. Polar residues predominate over residues 58–69 (ESYSGDNSPTLS). Residues 89–103 (TSHHSHSHNHNHNHN) show a composition bias toward basic residues. Residues 104–117 (HQLTQPIQQQQQTQ) are compositionally biased toward low complexity. The 189-residue stretch at 163–351 (VPLTQVPCRA…EVFPQHHLYY (189 aa)) folds into the Rho-GAP domain. Disordered stretches follow at residues 388–420 (TISG…DSTA), 432–482 (PEQQ…TFRV), and 508–571 (GPSG…TTDQ). Low complexity-rich tracts occupy residues 394–415 (PSNG…ITSP), 432–468 (PEQQ…QPIS), and 512–521 (TTGTTPNGGS). Gly residues predominate over residues 522 to 546 (LSIGGGNGGNGGSSLSVGSGGGNGG). Low complexity predominate over residues 547-557 (SSLSVGSNTSV). Residues 580–656 (AYTNNEDTKA…IEREIEKKRL (77 aa)) are a coiled coil. The disordered stretch occupies residues 686 to 713 (ISTIDGSGGSNRNSKNYGNGSSSSSNRR). Residues 695–713 (SNRNSKNYGNGSSSSSNRR) show a composition bias toward low complexity. Residues 715-743 (SNTINQQLQMQLQQLQIQQQQYQQTQQSQ) adopt a coiled-coil conformation. The tract at residues 759-781 (TTTTTTTSSGSNRFSSNRYKPVD) is disordered. Residues 766–781 (SSGSNRFSSNRYKPVD) show a composition bias toward polar residues. A coiled-coil region spans residues 839–952 (ENLVLLQQQY…IEEIHLLETY (114 aa)). Residues 965–1009 (STTKDLLTRSRSPTLPSSINMSTSSLGSSSSSAYNNNNNNNNVPK) are disordered. Residues 967 to 980 (TKDLLTRSRSPTLP) show a composition bias toward polar residues. The span at 981 to 1009 (SSINMSTSSLGSSSSSAYNNNNNNNNVPK) shows a compositional bias: low complexity.

The protein localises to the cytoplasm. In terms of biological role, rho GTPase-activating protein involved in the signal transduction pathway. The polypeptide is Rho GTPase-activating protein gacT (gacT) (Dictyostelium discoideum (Social amoeba)).